The sequence spans 259 residues: Large ribosomal subunit protein uL2m (259 aa).

Positions 234-259 are disordered; that stretch reads VAMNPVDHPNGGRTKTPKPERSPGVE. The span at 250-259 shows a compositional bias: basic and acidic residues; it reads PKPERSPGVE.

This sequence belongs to the universal ribosomal protein uL2 family.

It localises to the mitochondrion. This is Large ribosomal subunit protein uL2m (RPL2) from Paramecium tetraurelia.